The sequence spans 347 residues: MSALTPASEVILRHSDEFIARHVLFAGDLQDALPAQFDAAGVRVHTNQYHHWQLLSNTLEENVQFGLLATAETLAACDTLIYYWPKSKQEAQFQLANLLSILPVGTDIFVVGENRSGVRSAEEMLADFAQLAKIDSARRCGLYHGRLDKQPEFDADAWWESYQVGSVTVKTLPGVFSRDSLDSGSHLLLSTFNEPFKGSVLDVGCGAGVLASVLAQQSPKIKWTLSDVSAAAIEASRATLAVNNIEAQVIASNVYSDIKGRFEMIISNPPFHDGIQTSLTAAEMLIRGATAHLHVGGKLRIVANSFLPYPALLDAAFGSHEVLAQNGRFKVYQATVGRPPRDPKKKR.

Belongs to the methyltransferase superfamily. RsmC family. In terms of assembly, monomer.

The protein resides in the cytoplasm. It catalyses the reaction guanosine(1207) in 16S rRNA + S-adenosyl-L-methionine = N(2)-methylguanosine(1207) in 16S rRNA + S-adenosyl-L-homocysteine + H(+). In terms of biological role, specifically methylates the guanine in position 1207 of 16S rRNA in the 30S particle. The chain is Ribosomal RNA small subunit methyltransferase C from Yersinia pseudotuberculosis serotype IB (strain PB1/+).